Here is a 725-residue protein sequence, read N- to C-terminus: D-(-)-3-hydroxybutyrate oligomer hydrolase (725 aa).

An N-terminal signal peptide occupies residues 1–22 (MNTTRDANRLRQRASLSGLALA). The Charge relay system role is filled by Ser322.

It belongs to the D-(-)-3-hydroxybutyrate oligomer hydrolase family.

It localises to the secreted. The catalysed reaction is (3R)-hydroxybutanoate dimer + H2O = 2 (R)-3-hydroxybutanoate + H(+). Its pathway is lipid metabolism; butanoate metabolism. Participates in the degradation of poly-3-hydroxybutyrate (PHB). It works downstream of poly(3-hydroxybutyrate) depolymerase, hydrolyzing D(-)-3-hydroxybutyrate oligomers of various length (3HB-oligomers) into 3HB-monomers. The protein is D-(-)-3-hydroxybutyrate oligomer hydrolase of Ralstonia nicotianae (strain ATCC BAA-1114 / GMI1000) (Ralstonia solanacearum).